We begin with the raw amino-acid sequence, 151 residues long: FAD synthase (151 aa).

ATP-binding positions include 12-13, 17-20, Asp97, and Tyr125; these read TF and HPGH.

It belongs to the archaeal FAD synthase family. In terms of assembly, homodimer. It depends on a divalent metal cation as a cofactor.

It carries out the reaction FMN + ATP + H(+) = FAD + diphosphate. Its pathway is cofactor biosynthesis; FAD biosynthesis; FAD from FMN: step 1/1. Functionally, catalyzes the transfer of the AMP portion of ATP to flavin mononucleotide (FMN) to produce flavin adenine dinucleotide (FAD) coenzyme. The polypeptide is FAD synthase (Methanococcus vannielii (strain ATCC 35089 / DSM 1224 / JCM 13029 / OCM 148 / SB)).